The following is a 340-amino-acid chain: CRISPR system Cmr subunit Cmr6 (340 aa).

Belongs to the CRISPR system Cmr6 family. Part of the type III-B Cmr ribonucleoprotein (RNP) complex, an elongated RNP with Cmr2 and Cmr3 as the base, with Cmr4 and Cmr5 forming a helical core along the mature crRNA (39 or 45 nt in length), while the complex is capped by Cmr6 and Cmr1. The 5' end of the crRNA is bound to Cmr2 and Cmr3, while Cmr6 and a Cmr1 subunit (Cmr1-1 or Cmr1-2) cap the 3' end of the crRNA. The target RNA lies antiparallel to the crRNA, with its 5' end near Cmr1 and Cmr6 and its 3' end near Cmr2 and Cmr3; major target cleavage occurs nears the junction of Cmr1/Cmr6 and Cmr4/Cmr, with minor cleavage occurring at 6 nt intervals which coincide with the proposed spacing of Cmr4 subunits. Interacts with Cmr4 and Cmr5.

The protein resides in the cytoplasm. CRISPR (clustered regularly interspaced short palindromic repeat), is an adaptive immune system that provides protection against mobile genetic elements (viruses, transposable elements and conjugative plasmids). CRISPR clusters contain sequences complementary to antecedent mobile elements and target invading nucleic acids. CRISPR clusters are transcribed and processed into CRISPR RNA (crRNA), formerly called psiRNA (prokaryotic silencing) in this organism. Part of the Cmr ribonucleoprotein complex which has divalent cation-dependent endoribonuclease activity specific for ssRNA complementary to the crRNA (target RNA), generating 5' hydroxy- and 3' phosphate or 2'-3' cyclic phosphate termini. Cmr4 is probably the subunit that cleaves target RNA. Cmr complex does not cleave ssDNA complementary to the crRNA. Cleavage of invading RNA is guided by the crRNA; substrate cleavage occurs a fixed distance (14 nt) from the 3' end of the crRNA. In vitro reconstitution shows Cmr1-2 and Cmr5 are not absolutely necessary for target cleavage. This Pyrococcus furiosus (strain ATCC 43587 / DSM 3638 / JCM 8422 / Vc1) protein is CRISPR system Cmr subunit Cmr6.